The chain runs to 237 residues: Oil body-associated protein 2C (237 aa).

It belongs to the OBAP family.

This Arabidopsis thaliana (Mouse-ear cress) protein is Oil body-associated protein 2C.